Reading from the N-terminus, the 267-residue chain is Cytochrome b (267 aa).

A run of 4 helical transmembrane segments spans residues 4 to 24 (FGSL…LLAA), 48 to 69 (WLIR…YLHI), 84 to 104 (WNTG…GYVL), and 149 to 169 (FFTL…IHLT). Heme b is bound by residues histidine 54 and histidine 68. 2 residues coordinate heme b: histidine 153 and histidine 167. Histidine 172 lines the a ubiquinone pocket. A run of 2 helical transmembrane segments spans residues 197–217 (LKDI…ALFA) and 259–267 (LGGVLALAA).

This sequence belongs to the cytochrome b family. As to quaternary structure, the cytochrome bc1 complex contains 11 subunits: 3 respiratory subunits (MT-CYB, CYC1 and UQCRFS1), 2 core proteins (UQCRC1 and UQCRC2) and 6 low-molecular weight proteins (UQCRH/QCR6, UQCRB/QCR7, UQCRQ/QCR8, UQCR10/QCR9, UQCR11/QCR10 and a cleavage product of UQCRFS1). This cytochrome bc1 complex then forms a dimer. It depends on heme b as a cofactor.

The protein resides in the mitochondrion inner membrane. In terms of biological role, component of the ubiquinol-cytochrome c reductase complex (complex III or cytochrome b-c1 complex) that is part of the mitochondrial respiratory chain. The b-c1 complex mediates electron transfer from ubiquinol to cytochrome c. Contributes to the generation of a proton gradient across the mitochondrial membrane that is then used for ATP synthesis. This is Cytochrome b (MT-CYB) from Raphus cucullatus (Dodo).